We begin with the raw amino-acid sequence, 357 residues long: UDP-N-acetylglucosamine--N-acetylmuramyl-(pentapeptide) pyrophosphoryl-undecaprenol N-acetylglucosamine transferase (357 aa).

Residues Ser13 to Gly15, Arg166, Ser197, and Gln292 contribute to the UDP-N-acetyl-alpha-D-glucosamine site.

Belongs to the glycosyltransferase 28 family. MurG subfamily.

Its subcellular location is the cell membrane. It catalyses the reaction di-trans,octa-cis-undecaprenyl diphospho-N-acetyl-alpha-D-muramoyl-L-alanyl-D-glutamyl-meso-2,6-diaminopimeloyl-D-alanyl-D-alanine + UDP-N-acetyl-alpha-D-glucosamine = di-trans,octa-cis-undecaprenyl diphospho-[N-acetyl-alpha-D-glucosaminyl-(1-&gt;4)]-N-acetyl-alpha-D-muramoyl-L-alanyl-D-glutamyl-meso-2,6-diaminopimeloyl-D-alanyl-D-alanine + UDP + H(+). The protein operates within cell wall biogenesis; peptidoglycan biosynthesis. Its function is as follows. Cell wall formation. Catalyzes the transfer of a GlcNAc subunit on undecaprenyl-pyrophosphoryl-MurNAc-pentapeptide (lipid intermediate I) to form undecaprenyl-pyrophosphoryl-MurNAc-(pentapeptide)GlcNAc (lipid intermediate II). This Clostridium novyi (strain NT) protein is UDP-N-acetylglucosamine--N-acetylmuramyl-(pentapeptide) pyrophosphoryl-undecaprenol N-acetylglucosamine transferase.